A 144-amino-acid polypeptide reads, in one-letter code: Transcription antitermination protein NusB (144 aa).

This sequence belongs to the NusB family.

Functionally, involved in transcription antitermination. Required for transcription of ribosomal RNA (rRNA) genes. Binds specifically to the boxA antiterminator sequence of the ribosomal RNA (rrn) operons. The protein is Transcription antitermination protein NusB of Dictyoglomus thermophilum (strain ATCC 35947 / DSM 3960 / H-6-12).